The following is a 313-amino-acid chain: tRNA uridine(34) hydroxylase (313 aa).

A Rhodanese domain is found at 124–218 (SDPEVLLIDT…YLEEVPQQES (95 aa)). The active-site Cysteine persulfide intermediate is the Cys178.

It belongs to the TrhO family.

It catalyses the reaction uridine(34) in tRNA + AH2 + O2 = 5-hydroxyuridine(34) in tRNA + A + H2O. Catalyzes oxygen-dependent 5-hydroxyuridine (ho5U) modification at position 34 in tRNAs. This chain is tRNA uridine(34) hydroxylase, found in Pseudomonas fluorescens (strain ATCC BAA-477 / NRRL B-23932 / Pf-5).